Here is a 177-residue protein sequence, read N- to C-terminus: Small ribosomal subunit protein bS21m (177 aa).

The N-terminal 17 residues, 1-17 (MLKSTLRLSRISLRRGF), are a transit peptide targeting the mitochondrion.

It belongs to the bacterial ribosomal protein bS21 family. Component of the mitochondrial small ribosomal subunit (mt-SSU). Mature yeast 74S mitochondrial ribosomes consist of a small (37S) and a large (54S) subunit. The 37S small subunit contains a 15S ribosomal RNA (15S mt-rRNA) and 34 different proteins. The 54S large subunit contains a 21S rRNA (21S mt-rRNA) and 46 different proteins.

The protein localises to the mitochondrion. Functionally, component of the mitochondrial ribosome (mitoribosome), a dedicated translation machinery responsible for the synthesis of mitochondrial genome-encoded proteins, including at least some of the essential transmembrane subunits of the mitochondrial respiratory chain. The mitoribosomes are attached to the mitochondrial inner membrane and translation products are cotranslationally integrated into the membrane. This is Small ribosomal subunit protein bS21m (MRP21) from Saccharomyces cerevisiae (strain ATCC 204508 / S288c) (Baker's yeast).